The primary structure comprises 124 residues: Alpha-amylase inhibitor 0.53 (124 aa).

Intrachain disulfides connect C20–C41, C28–C83, C42–C99, and C54–C115.

This sequence belongs to the protease inhibitor I6 (cereal trypsin/alpha-amylase inhibitor) family. In terms of assembly, homodimer. Post-translationally, the disulfide bonds are essential for the inhibitor activity. In terms of tissue distribution, endosperm.

Its subcellular location is the secreted. Its function is as follows. Alpha-amylase inhibitor. The chain is Alpha-amylase inhibitor 0.53 from Triticum aestivum (Wheat).